Consider the following 325-residue polypeptide: Lipid droplet-associated hydrolase (325 aa).

The active-site Nucleophile is Ser-139. Active-site charge relay system residues include Asp-271 and His-300.

Belongs to the AB hydrolase superfamily. LDAH family.

The protein resides in the lipid droplet. It is found in the endoplasmic reticulum. It carries out the reaction a cholesterol ester + H2O = cholesterol + a fatty acid + H(+). Its function is as follows. Probable serine lipid hydrolase associated with lipid droplets. Has low cholesterol esterase activity. Appears to lack triglyceride lipase activity. Involved in cholesterol and triglyceride homeostasis; stimulates cellular triglyceride accumulation and cellular cholesterol release. Acts antagonistically with PNPLA2/ATGL in regulation of cellular lipid stores. May regulate triglyceride accumulation indirectly through stimulation of PNPLA2/ATGL ubiquitination and proteasomal degradation. Promotes microtubule-dependent lipid droplet fusion. Highly expressed in macrophage-rich areas in atherosclerotic lesions, suggesting that it could promote cholesterol ester turnover in macrophages. In Rattus norvegicus (Rat), this protein is Lipid droplet-associated hydrolase.